Here is a 236-residue protein sequence, read N- to C-terminus: (5-formylfuran-3-yl)methyl phosphate synthase (236 aa).

The active-site Schiff-base intermediate with substrate is the Lys27. Lys85 acts as the Proton acceptor in catalysis.

Belongs to the MfnB family.

It catalyses the reaction 2 D-glyceraldehyde 3-phosphate = 4-(hydroxymethyl)-2-furancarboxaldehyde phosphate + phosphate + 2 H2O. It participates in cofactor biosynthesis; methanofuran biosynthesis. Catalyzes the formation of 4-(hydroxymethyl)-2-furancarboxaldehyde phosphate (4-HFC-P) from two molecules of glyceraldehyde-3-P (GA-3-P). In Methanococcus maripaludis (strain C7 / ATCC BAA-1331), this protein is (5-formylfuran-3-yl)methyl phosphate synthase.